A 273-amino-acid chain; its full sequence is Non-homologous end joining protein Ku (273 aa).

One can recognise a Ku domain in the interval 13–190 (KLSLVTCPVA…FTGIEKKSDA (178 aa)). Positions 227-251 (KKKAKKPSKAKASKSTKGDDEEKSN) are disordered. The span at 228-240 (KKAKKPSKAKASK) shows a compositional bias: basic residues.

The protein belongs to the prokaryotic Ku family. In terms of assembly, homodimer. Interacts with LigD.

In terms of biological role, with LigD forms a non-homologous end joining (NHEJ) DNA repair enzyme, which repairs dsDNA breaks with reduced fidelity. Binds linear dsDNA with 5'- and 3'- overhangs but not closed circular dsDNA nor ssDNA. Recruits and stimulates the ligase activity of LigD. In Allorhizobium ampelinum (strain ATCC BAA-846 / DSM 112012 / S4) (Agrobacterium vitis (strain S4)), this protein is Non-homologous end joining protein Ku.